The following is a 464-amino-acid chain: ATP synthase subunit beta (464 aa).

Residue G153–T160 participates in ATP binding.

It belongs to the ATPase alpha/beta chains family. F-type ATPases have 2 components, CF(1) - the catalytic core - and CF(0) - the membrane proton channel. CF(1) has five subunits: alpha(3), beta(3), gamma(1), delta(1), epsilon(1). CF(0) has three main subunits: a(1), b(2) and c(9-12). The alpha and beta chains form an alternating ring which encloses part of the gamma chain. CF(1) is attached to CF(0) by a central stalk formed by the gamma and epsilon chains, while a peripheral stalk is formed by the delta and b chains.

The protein localises to the cell membrane. The catalysed reaction is ATP + H2O + 4 H(+)(in) = ADP + phosphate + 5 H(+)(out). Produces ATP from ADP in the presence of a proton gradient across the membrane. The catalytic sites are hosted primarily by the beta subunits. This chain is ATP synthase subunit beta, found in Alkaliphilus metalliredigens (strain QYMF).